An 831-amino-acid chain; its full sequence is Serine/threonine-protein kinase ATG1 (831 aa).

The Protein kinase domain occupies 21–321 (YSVEKEIGKG…FTDFFNNEVV (301 aa)). Residues 27 to 35 (IGKGSFAVV) and lysine 50 contribute to the ATP site. Aspartate 168 functions as the Proton acceptor in the catalytic mechanism. Composition is skewed to polar residues over residues 360–382 (QQESAHIPPTQTDENTSVQTGVR) and 405–419 (NSQNPEQSYQSASQK). The disordered stretch occupies residues 360 to 419 (QQESAHIPPTQTDENTSVQTGVRRTSGKERLATNHPPHQQIHPEDNSQNPEQSYQSASQK).

It belongs to the protein kinase superfamily. Ser/Thr protein kinase family. APG1/unc-51/ULK1 subfamily. In terms of assembly, homodimer. Forms a ternary complex with ATG13 and ATG17.

Its subcellular location is the cytoplasm. The protein resides in the preautophagosomal structure membrane. It carries out the reaction L-seryl-[protein] + ATP = O-phospho-L-seryl-[protein] + ADP + H(+). The enzyme catalyses L-threonyl-[protein] + ATP = O-phospho-L-threonyl-[protein] + ADP + H(+). Its function is as follows. Serine/threonine protein kinase involved in the cytoplasm to vacuole transport (Cvt) and found to be essential in autophagy, where it is required for the formation of autophagosomes. Involved in the clearance of protein aggregates which cannot be efficiently cleared by the proteasome. Required for selective autophagic degradation of the nucleus (nucleophagy) as well as for mitophagy which contributes to regulate mitochondrial quantity and quality by eliminating the mitochondria to a basal level to fulfill cellular energy requirements and preventing excess ROS production. Also involved in endoplasmic reticulum-specific autophagic process, in selective removal of ER-associated degradation (ERAD) substrates. Plays a key role in ATG9 and ATG23 cycling through the pre-autophagosomal structure and is necessary to promote ATG18 binding to ATG9 through phosphorylation of ATG9. Catalyzes phosphorylation of ATG4, decreasing the interaction between ATG4 and ATG8 and impairing deconjugation of PE-conjugated forms of ATG8. The chain is Serine/threonine-protein kinase ATG1 from Kluyveromyces lactis (strain ATCC 8585 / CBS 2359 / DSM 70799 / NBRC 1267 / NRRL Y-1140 / WM37) (Yeast).